Consider the following 655-residue polypeptide: p-hydroxybenzoic acid efflux pump subunit AaeB (655 aa).

11 helical membrane-spanning segments follow: residues 13–33, 38–58, 69–89, 93–113, 121–141, 152–172, 370–390, 407–427, 431–451, 459–479, and 482–502; these read FAVKLATAIVLALFVGFHFQL, WAVLTAAIVAAGPAFAAGGEP, LRIIGTFIGCIAGLVIIIAMI, LLMILVCCIWAGFCTWISSLV, WGLAGYTALIIVITIQPEPLL, EIVIGIVCAIMADLLFSPRSI, LFWLWTGWTSGSGAMVMIAVV, FIYGTLAALPLGLLYFLVIIP, QSMLLLCISLAVLGFFLGIEV, MGALASTINIIVLDNPMTFHF, and FLDSALGQIVGCVLAFTVILL.

This sequence belongs to the aromatic acid exporter ArAE (TC 2.A.85) family.

It localises to the cell inner membrane. In terms of biological role, forms an efflux pump with AaeA. Could function as a metabolic relief valve, allowing to eliminate certain compounds when they accumulate to high levels in the cell. This Escherichia coli (strain SMS-3-5 / SECEC) protein is p-hydroxybenzoic acid efflux pump subunit AaeB.